Reading from the N-terminus, the 210-residue chain is MSEAIFNLDASVRTDLGKGASRRLRREDKLPGIIYGGEEAPVSITLDHNKVNNSADFEAFYSHVLTLNLDGKPVEVLVKDMQRHPYKPKIMHIDFQRVIAGEDVHTNVPLHFVNEEKSAAVKAGGIAEHHVTEIEVTCQPKDLPEFIEVDMAAVEMGQTVHLSDLTLPAGVSSVELAKNDEAHDLAVVTVKPAPKAAETDEDGEEAASEE.

Positions 191–210 (KPAPKAAETDEDGEEAASEE) are disordered. Positions 199–210 (TDEDGEEAASEE) are enriched in acidic residues.

This sequence belongs to the bacterial ribosomal protein bL25 family. CTC subfamily. As to quaternary structure, part of the 50S ribosomal subunit; part of the 5S rRNA/L5/L18/L25 subcomplex. Contacts the 5S rRNA. Binds to the 5S rRNA independently of L5 and L18.

Functionally, this is one of the proteins that binds to the 5S RNA in the ribosome where it forms part of the central protuberance. This is Large ribosomal subunit protein bL25 from Alteromonas mediterranea (strain DSM 17117 / CIP 110805 / LMG 28347 / Deep ecotype).